A 158-amino-acid polypeptide reads, in one-letter code: Phosphopantetheine adenylyltransferase (158 aa).

Residue threonine 8 participates in substrate binding. ATP-binding positions include 8 to 9 (TF) and histidine 16. 3 residues coordinate substrate: lysine 40, leucine 72, and arginine 86. ATP is bound by residues 87 to 89 (GLR), glutamate 97, and 122 to 128 (HAFISSS).

It belongs to the bacterial CoaD family. Homohexamer. Mg(2+) is required as a cofactor.

The protein localises to the cytoplasm. It catalyses the reaction (R)-4'-phosphopantetheine + ATP + H(+) = 3'-dephospho-CoA + diphosphate. The protein operates within cofactor biosynthesis; coenzyme A biosynthesis; CoA from (R)-pantothenate: step 4/5. Its function is as follows. Reversibly transfers an adenylyl group from ATP to 4'-phosphopantetheine, yielding dephospho-CoA (dPCoA) and pyrophosphate. The protein is Phosphopantetheine adenylyltransferase of Campylobacter jejuni subsp. jejuni serotype O:6 (strain 81116 / NCTC 11828).